Consider the following 454-residue polypeptide: Chromosomal replication initiator protein DnaA (454 aa).

The interval 1–80 (MNLSNLWQSC…NPELRISLKE (80 aa)) is domain I, interacts with DnaA modulators. The interval 80–117 (EGVKPAPKIVESTPNTSLRSESAVDFQAESSASVKFES) is domain II. Residues 118-335 (HLNTKHLFDN…GALNRVKAMQ (218 aa)) form a domain III, AAA+ region region. Gly-163, Gly-165, Lys-166, and Thr-167 together coordinate ATP. Positions 336-454 (DFKGGDIDID…WANLIRTLSA (119 aa)) are domain IV, binds dsDNA.

Belongs to the DnaA family. As to quaternary structure, oligomerizes as a right-handed, spiral filament on DNA at oriC.

It localises to the cytoplasm. Its function is as follows. Plays an essential role in the initiation and regulation of chromosomal replication. ATP-DnaA binds to the origin of replication (oriC) to initiate formation of the DNA replication initiation complex once per cell cycle. Binds the DnaA box (a 9 base pair repeat at the origin) and separates the double-stranded (ds)DNA. Forms a right-handed helical filament on oriC DNA; dsDNA binds to the exterior of the filament while single-stranded (ss)DNA is stabiized in the filament's interior. The ATP-DnaA-oriC complex binds and stabilizes one strand of the AT-rich DNA unwinding element (DUE), permitting loading of DNA polymerase. After initiation quickly degrades to an ADP-DnaA complex that is not apt for DNA replication. Binds acidic phospholipids. In Haemophilus influenzae (strain ATCC 51907 / DSM 11121 / KW20 / Rd), this protein is Chromosomal replication initiator protein DnaA.